Here is a 108-residue protein sequence, read N- to C-terminus: UPF0102 protein SO_0299 (108 aa).

The protein belongs to the UPF0102 family.

This is UPF0102 protein SO_0299 from Shewanella oneidensis (strain ATCC 700550 / JCM 31522 / CIP 106686 / LMG 19005 / NCIMB 14063 / MR-1).